The primary structure comprises 161 residues: Probable chemoreceptor glutamine deamidase CheD (161 aa).

It belongs to the CheD family.

It catalyses the reaction L-glutaminyl-[protein] + H2O = L-glutamyl-[protein] + NH4(+). Functionally, probably deamidates glutamine residues to glutamate on methyl-accepting chemotaxis receptors (MCPs), playing an important role in chemotaxis. The protein is Probable chemoreceptor glutamine deamidase CheD of Syntrophomonas wolfei subsp. wolfei (strain DSM 2245B / Goettingen).